The primary structure comprises 208 residues: Guanylate kinase (208 aa).

Residues 4–185 (GNLYIISAPS…ALVDLEHILR (182 aa)) form the Guanylate kinase-like domain. Residue 11 to 18 (APSGAGKS) participates in ATP binding.

The protein belongs to the guanylate kinase family.

Its subcellular location is the cytoplasm. The enzyme catalyses GMP + ATP = GDP + ADP. In terms of biological role, essential for recycling GMP and indirectly, cGMP. This Histophilus somni (strain 129Pt) (Haemophilus somnus) protein is Guanylate kinase.